The chain runs to 223 residues: Deoxyribose-phosphate aldolase (223 aa).

Asp-89 functions as the Proton donor/acceptor in the catalytic mechanism. Residue Lys-152 is the Schiff-base intermediate with acetaldehyde of the active site. Lys-181 (proton donor/acceptor) is an active-site residue.

It belongs to the DeoC/FbaB aldolase family. DeoC type 1 subfamily.

The protein localises to the cytoplasm. It carries out the reaction 2-deoxy-D-ribose 5-phosphate = D-glyceraldehyde 3-phosphate + acetaldehyde. Its pathway is carbohydrate degradation; 2-deoxy-D-ribose 1-phosphate degradation; D-glyceraldehyde 3-phosphate and acetaldehyde from 2-deoxy-alpha-D-ribose 1-phosphate: step 2/2. Catalyzes a reversible aldol reaction between acetaldehyde and D-glyceraldehyde 3-phosphate to generate 2-deoxy-D-ribose 5-phosphate. The polypeptide is Deoxyribose-phosphate aldolase (Listeria monocytogenes serotype 4b (strain F2365)).